A 603-amino-acid polypeptide reads, in one-letter code: Elongation factor 4 (603 aa).

Residues Ser7–Lys191 enclose the tr-type G domain. GTP-binding positions include Asp19 to Thr24 and Asn138 to Asp141.

The protein belongs to the TRAFAC class translation factor GTPase superfamily. Classic translation factor GTPase family. LepA subfamily.

Its subcellular location is the cell inner membrane. It carries out the reaction GTP + H2O = GDP + phosphate + H(+). In terms of biological role, required for accurate and efficient protein synthesis under certain stress conditions. May act as a fidelity factor of the translation reaction, by catalyzing a one-codon backward translocation of tRNAs on improperly translocated ribosomes. Back-translocation proceeds from a post-translocation (POST) complex to a pre-translocation (PRE) complex, thus giving elongation factor G a second chance to translocate the tRNAs correctly. Binds to ribosomes in a GTP-dependent manner. This chain is Elongation factor 4, found in Bradyrhizobium diazoefficiens (strain JCM 10833 / BCRC 13528 / IAM 13628 / NBRC 14792 / USDA 110).